A 90-amino-acid polypeptide reads, in one-letter code: Small ribosomal subunit protein uS17 (90 aa).

Belongs to the universal ribosomal protein uS17 family. In terms of assembly, part of the 30S ribosomal subunit.

In terms of biological role, one of the primary rRNA binding proteins, it binds specifically to the 5'-end of 16S ribosomal RNA. The polypeptide is Small ribosomal subunit protein uS17 (Burkholderia cenocepacia (strain ATCC BAA-245 / DSM 16553 / LMG 16656 / NCTC 13227 / J2315 / CF5610) (Burkholderia cepacia (strain J2315))).